We begin with the raw amino-acid sequence, 294 residues long: Enoyl-CoA hydratase domain-containing protein 3, mitochondrial (294 aa).

Residues 1–61 (MSWLRSCGER…IILNNPQQRN (61 aa)) constitute a mitochondrion transit peptide.

It belongs to the enoyl-CoA hydratase/isomerase family.

The protein localises to the mitochondrion. Its function is as follows. May play a role in fatty acid biosynthesis and insulin sensitivity. This is Enoyl-CoA hydratase domain-containing protein 3, mitochondrial (echdc3) from Xenopus laevis (African clawed frog).